The primary structure comprises 274 residues: Rhamnulose-1-phosphate aldolase (274 aa).

Glutamate 117 is a catalytic residue. Histidine 141, histidine 143, and histidine 212 together coordinate Zn(2+).

Belongs to the aldolase class II family. RhaD subfamily. Homotetramer. The cofactor is Zn(2+).

Its subcellular location is the cytoplasm. It catalyses the reaction L-rhamnulose 1-phosphate = (S)-lactaldehyde + dihydroxyacetone phosphate. Its pathway is carbohydrate degradation; L-rhamnose degradation; glycerone phosphate from L-rhamnose: step 3/3. In terms of biological role, catalyzes the reversible cleavage of L-rhamnulose-1-phosphate to dihydroxyacetone phosphate (DHAP) and L-lactaldehyde. This is Rhamnulose-1-phosphate aldolase from Escherichia coli O157:H7.